The primary structure comprises 564 residues: Eukaryotic translation initiation factor 3 subunit L (564 aa).

At serine 2 the chain carries N-acetylserine. Serine 21 bears the Phosphoserine mark. The PCI domain occupies 331 to 537 (DAIRVFANIL…IHIADTKVAR (207 aa)). Lysine 465 and lysine 549 each carry N6-acetyllysine.

As to quaternary structure, component of the eukaryotic translation initiation factor 3 (eIF-3) complex, which is composed of 13 subunits: EIF3A, EIF3B, EIF3C, EIF3D, EIF3E, EIF3F, EIF3G, EIF3H, EIF3I, EIF3J, EIF3K, EIF3L and EIF3M. The eIF-3 complex appears to include 3 stable modules: module A is composed of EIF3A, EIF3B, EIF3G and EIF3I; module B is composed of EIF3F, EIF3H, and EIF3M; and module C is composed of EIF3C, EIF3D, EIF3E, EIF3K and EIF3L. EIF3C of module C binds EIF3B of module A and EIF3H of module B, thereby linking the three modules. EIF3J is a labile subunit that binds to the eIF-3 complex via EIF3B. The eIF-3 complex interacts with RPS6KB1 under conditions of nutrient depletion. Mitogenic stimulation leads to binding and activation of a complex composed of MTOR and RPTOR, leading to phosphorylation and release of RPS6KB1 and binding of EIF4B to eIF-3. Interacts with RRN3.

The protein localises to the cytoplasm. Functionally, component of the eukaryotic translation initiation factor 3 (eIF-3) complex, which is required for several steps in the initiation of protein synthesis. The eIF-3 complex associates with the 40S ribosome and facilitates the recruitment of eIF-1, eIF-1A, eIF-2:GTP:methionyl-tRNAi and eIF-5 to form the 43S pre-initiation complex (43S PIC). The eIF-3 complex stimulates mRNA recruitment to the 43S PIC and scanning of the mRNA for AUG recognition. The eIF-3 complex is also required for disassembly and recycling of post-termination ribosomal complexes and subsequently prevents premature joining of the 40S and 60S ribosomal subunits prior to initiation. The eIF-3 complex specifically targets and initiates translation of a subset of mRNAs involved in cell proliferation, including cell cycling, differentiation and apoptosis, and uses different modes of RNA stem-loop binding to exert either translational activation or repression. In terms of biological role, (Microbial infection) In case of FCV infection, plays a role in the ribosomal termination-reinitiation event leading to the translation of VP2. The polypeptide is Eukaryotic translation initiation factor 3 subunit L (Homo sapiens (Human)).